A 303-amino-acid chain; its full sequence is Signal recognition particle receptor FtsY (303 aa).

GTP contacts are provided by residues 108–115 (GVNGVGKT), 190–194 (DTAGR), and 254–257 (TKLD).

The protein belongs to the GTP-binding SRP family. FtsY subfamily. Part of the signal recognition particle protein translocation system, which is composed of SRP and FtsY. SRP is a ribonucleoprotein composed of Ffh and a 4.5S RNA molecule.

The protein resides in the cell inner membrane. It localises to the cytoplasm. It carries out the reaction GTP + H2O = GDP + phosphate + H(+). Involved in targeting and insertion of nascent membrane proteins into the cytoplasmic membrane. Acts as a receptor for the complex formed by the signal recognition particle (SRP) and the ribosome-nascent chain (RNC). Interaction with SRP-RNC leads to the transfer of the RNC complex to the Sec translocase for insertion into the membrane, the hydrolysis of GTP by both Ffh and FtsY, and the dissociation of the SRP-FtsY complex into the individual components. This is Signal recognition particle receptor FtsY from Rickettsia prowazekii (strain Madrid E).